The sequence spans 344 residues: Acireductone dioxygenase (344 aa).

The Fe(2+) site is built by histidine 92, histidine 94, glutamate 98, and histidine 137. The Ni(2+) site is built by histidine 92, histidine 94, glutamate 98, and histidine 137.

Belongs to the acireductone dioxygenase (ARD) family. Fe(2+) serves as cofactor. Requires Ni(2+) as cofactor.

The protein localises to the cytoplasm. The protein resides in the nucleus. It carries out the reaction 1,2-dihydroxy-5-(methylsulfanyl)pent-1-en-3-one + O2 = 4-methylsulfanyl-2-oxobutanoate + formate + 2 H(+). The catalysed reaction is 1,2-dihydroxy-5-(methylsulfanyl)pent-1-en-3-one + O2 = 3-(methylsulfanyl)propanoate + CO + formate + 2 H(+). The protein operates within amino-acid biosynthesis; L-methionine biosynthesis via salvage pathway; L-methionine from S-methyl-5-thio-alpha-D-ribose 1-phosphate: step 5/6. Catalyzes 2 different reactions between oxygen and the acireductone 1,2-dihydroxy-3-keto-5-methylthiopentene (DHK-MTPene) depending upon the metal bound in the active site. Fe-containing acireductone dioxygenase (Fe-ARD) produces formate and 2-keto-4-methylthiobutyrate (KMTB), the alpha-ketoacid precursor of methionine in the methionine recycle pathway. Ni-containing acireductone dioxygenase (Ni-ARD) produces methylthiopropionate, carbon monoxide and formate, and does not lie on the methionine recycle pathway. The chain is Acireductone dioxygenase from Leishmania major.